Here is a 405-residue protein sequence, read N- to C-terminus: Nicotinate phosphoribosyltransferase (405 aa).

Histidine 230 carries the phosphohistidine; by autocatalysis modification.

This sequence belongs to the NAPRTase family. Transiently phosphorylated on a His residue during the reaction cycle. Phosphorylation strongly increases the affinity for substrates and increases the rate of nicotinate D-ribonucleotide production. Dephosphorylation regenerates the low-affinity form of the enzyme, leading to product release.

The enzyme catalyses nicotinate + 5-phospho-alpha-D-ribose 1-diphosphate + ATP + H2O = nicotinate beta-D-ribonucleotide + ADP + phosphate + diphosphate. It functions in the pathway cofactor biosynthesis; NAD(+) biosynthesis; nicotinate D-ribonucleotide from nicotinate: step 1/1. Its function is as follows. Catalyzes the synthesis of beta-nicotinate D-ribonucleotide from nicotinate and 5-phospho-D-ribose 1-phosphate at the expense of ATP. The sequence is that of Nicotinate phosphoribosyltransferase from Bordetella pertussis (strain Tohama I / ATCC BAA-589 / NCTC 13251).